Reading from the N-terminus, the 259-residue chain is Putative aldolase class 2 protein PA3430 (259 aa).

The Zn(2+) site is built by His113, His115, and His176.

This sequence belongs to the aldolase class II family. Zn(2+) is required as a cofactor.

This chain is Putative aldolase class 2 protein PA3430, found in Pseudomonas aeruginosa (strain ATCC 15692 / DSM 22644 / CIP 104116 / JCM 14847 / LMG 12228 / 1C / PRS 101 / PAO1).